A 1314-amino-acid polypeptide reads, in one-letter code: MSSDDSSLMASIIYYSQEKYFHHVLQAANVGLERYSSDPALQFFRAYGILGEDHIHDAISELEGIQSHPDTSLCAVIALLSAHKSCDTIDIEAVQELESSLKEIRRSASSTALYYASLFLWFMGHHDKAREYVDHMLKVSSGSKEGYVLKGWVDLTSSKPHVVKKSIKYLEQGTQDTKDVLGLMGKATYFMTQQNFSGALEVANQVTLACSNFLPALVLKMKLFLARQDWDQTIETGQRILEKDENNIDAWQILAVHELVKEGNTDRAADRVRNLIKALETGEPHNPNLHLKKILVISRLCGRHQVVHRLVSGFLERIFMATPSCALVATELGYLFILHQQVKEACLWYKEAMKLEENRLAALAGSIWCQILQGQLEEAAHQLEFLKEVQQSLGKSELLVFLQALVAAKKQRLEQEATALLKEAVEVHFSSMQGLALSPEYFEKLDPLFLVCIAKEYLHFCPKQPRSPGQLVSPLLKQVAMILSPVVKVAPAMMEPLYVTAQVKFLSGELENAQSTLQRCLELDPTFVDAHLLMSQIYLAQGNFAMCSHCLELGVSHNFQVRDHPLYHFIKARALNKTGDYAEAIKTLKMIIKVPTSKAEEGRKSQSPSVRPSERASILLELVEALRLNGELHEATKIMQDAINEFSGTPEEMRITVANVDLALSKGNVDLALNMLRGITPKQPCYTEAKEKMASIYLHTRKDVRLYIGCYVELCEHLPGPHSSLLLGDAFMNIQEPEKALEVYDEAYRKNPHDASLVSRIGQAYVKTHQYAKAINYYEAAQKISGQDFLCCELAELLLKLKKYHKAEKVLKQALERDSGVKDIPSMINEVKCLLLLAKVYKSHKKEEVMETLNLALDLQSRILKRVPLEQSEMIPFQNQLAASICIQIGEHHLAEKDYDSALKSYKDALAYSPTDSKVVLELAHLYLLLGQLDLCEQRCAPLLEMEQTHERAAVMLADLMFRRQNYETAINLYHQVLEKAPDNFLVLNKLVDLLRRSGKLEEAPAFFELAKKVSSRVPLEPGFNYCQGIYFWHIGQPNEALRFLNKARKDSTWGQLATCYMVQICLNPDNEIVGGEAFESLVGDSNSASRKESQQHGVRTAEKLLREFYPHSESGQTQLRLLQNLCLLATREKANVEVALGAFIEMAQAEKDSIPALLAMAQAYILLKQVPKARTQLKRLAKVPWTVDEAEDLEKSWLLLADIYCQGGKFDLALELLRRCLQYNKSCCRAYEYMGFIMEKEQSYKDAATNYELAWKYSHQANPAIGFKLAFNYLKDKKFVDAIEVCHSVLTEHPKYPKIREEILEKAQGSLRP.

19 TPR repeats span residues 110–143 (STALYYASLFLWFMGHHDKAREYVDHMLKVSSGS), 214–247 (LPALVLKMKLFLARQDWDQTIETGQRILEKDENN), 326–359 (ALVATELGYLFILHQQVKEACLWYKEAMKLEENR), 494–527 (MEPLYVTAQVKFLSGELENAQSTLQRCLELDPTF), 529–561 (DAHLLMSQIYLAQGNFAMCSHCLELGVSHNFQV), 565–598 (PLYHFIKARALNKTGDYAEAIKTLKMIIKVPTSK), 616–649 (ASILLELVEALRLNGELHEATKIMQDAINEFSGT), 721–754 (PHSSLLLGDAFMNIQEPEKALEVYDEAYRKNPHD), 755–788 (ASLVSRIGQAYVKTHQYAKAINYYEAAQKISGQD), 790–821 (LCCELAELLLKLKKYHKAEKVLKQALERDSGV), 831–863 (VKCLLLLAKVYKSHKKEEVMETLNLALDLQSRI), 883–916 (ASICIQIGEHHLAEKDYDSALKSYKDALAYSPTD), 918–950 (KVVLELAHLYLLLGQLDLCEQRCAPLLEMEQTH), 951–984 (ERAAVMLADLMFRRQNYETAINLYHQVLEKAPDN), 986–1018 (LVLNKLVDLLRRSGKLEEAPAFFELAKKVSSRV), 1022–1055 (PGFNYCQGIYFWHIGQPNEALRFLNKARKDSTWG), 1195–1228 (EKSWLLLADIYCQGGKFDLALELLRRCLQYNKSC), 1230–1262 (RAYEYMGFIMEKEQSYKDAATNYELAWKYSHQA), and 1264–1297 (PAIGFKLAFNYLKDKKFVDAIEVCHSVLTEHPKY).

It belongs to the TTC21 family. As to quaternary structure, interacts with IFT20. Interacts with IFT52. Interacts with IFT140. Interacts with CEP78; regulating IFT20 stability and localization.

In terms of biological role, intraflagellar transport (IFT)-associated protein required for spermatogenesis. Required for sperm flagellar formation and intraflagellar transport. This is Tetratricopeptide repeat protein 21A (Ttc21a) from Mus musculus (Mouse).